The chain runs to 178 residues: E1B protein, small T-antigen (178 aa).

Belongs to the adenoviridae E1B 19 kDa protein family.

Its subcellular location is the host cell membrane. The protein localises to the host nucleus envelope. The protein resides in the host nucleus lamina. Functionally, putative adenovirus Bcl-2 homolog that inhibits apoptosis induced by TNF or FAS pathways, as well as p53-mediated apoptosis. Without E1B 19K function, virus production is compromised because of premature death of host cell. Interacts with Bax protein in cell lysates. This chain is E1B protein, small T-antigen, found in Human adenovirus B serotype 7 (HAdV-7).